A 185-amino-acid chain; its full sequence is Ribosome-recycling factor (185 aa).

It belongs to the RRF family.

The protein resides in the cytoplasm. In terms of biological role, responsible for the release of ribosomes from messenger RNA at the termination of protein biosynthesis. May increase the efficiency of translation by recycling ribosomes from one round of translation to another. The chain is Ribosome-recycling factor from Baumannia cicadellinicola subsp. Homalodisca coagulata.